A 263-amino-acid chain; its full sequence is Endonuclease 8 (263 aa).

P2 serves as the catalytic Schiff-base intermediate with DNA. E3 serves as the catalytic Proton donor. K53 serves as the catalytic Proton donor; for beta-elimination activity. 3 residues coordinate DNA: Q70, R125, and N169. The segment at 229–263 (KVFHRDGEPCERCGGIIEKTTLSSRPFYWCPGCQH) adopts an FPG-type zinc-finger fold. R253 (proton donor; for delta-elimination activity) is an active-site residue.

This sequence belongs to the FPG family. Zn(2+) is required as a cofactor.

The enzyme catalyses 2'-deoxyribonucleotide-(2'-deoxyribose 5'-phosphate)-2'-deoxyribonucleotide-DNA = a 3'-end 2'-deoxyribonucleotide-(2,3-dehydro-2,3-deoxyribose 5'-phosphate)-DNA + a 5'-end 5'-phospho-2'-deoxyribonucleoside-DNA + H(+). Its function is as follows. Involved in base excision repair of DNA damaged by oxidation or by mutagenic agents. Acts as a DNA glycosylase that recognizes and removes damaged bases. Has a preference for oxidized pyrimidines, such as thymine glycol, 5,6-dihydrouracil and 5,6-dihydrothymine. Has AP (apurinic/apyrimidinic) lyase activity and introduces nicks in the DNA strand. Cleaves the DNA backbone by beta-delta elimination to generate a single-strand break at the site of the removed base with both 3'- and 5'-phosphates. The protein is Endonuclease 8 of Escherichia coli O127:H6 (strain E2348/69 / EPEC).